Here is a 370-residue protein sequence, read N- to C-terminus: Queuine tRNA-ribosyltransferase (370 aa).

The active-site Proton acceptor is D93. Residues 93–97 (DSGGF), D147, Q189, and G216 each bind substrate. The tract at residues 247–253 (GVGSPDC) is RNA binding. D266 functions as the Nucleophile in the catalytic mechanism. An RNA binding; important for wobble base 34 recognition region spans residues 271–275 (TRIAR). Residues C304, C306, C309, and H335 each coordinate Zn(2+).

It belongs to the queuine tRNA-ribosyltransferase family. As to quaternary structure, homodimer. Within each dimer, one monomer is responsible for RNA recognition and catalysis, while the other monomer binds to the replacement base PreQ1. The cofactor is Zn(2+).

The catalysed reaction is 7-aminomethyl-7-carbaguanine + guanosine(34) in tRNA = 7-aminomethyl-7-carbaguanosine(34) in tRNA + guanine. Its pathway is tRNA modification; tRNA-queuosine biosynthesis. In terms of biological role, catalyzes the base-exchange of a guanine (G) residue with the queuine precursor 7-aminomethyl-7-deazaguanine (PreQ1) at position 34 (anticodon wobble position) in tRNAs with GU(N) anticodons (tRNA-Asp, -Asn, -His and -Tyr). Catalysis occurs through a double-displacement mechanism. The nucleophile active site attacks the C1' of nucleotide 34 to detach the guanine base from the RNA, forming a covalent enzyme-RNA intermediate. The proton acceptor active site deprotonates the incoming PreQ1, allowing a nucleophilic attack on the C1' of the ribose to form the product. After dissociation, two additional enzymatic reactions on the tRNA convert PreQ1 to queuine (Q), resulting in the hypermodified nucleoside queuosine (7-(((4,5-cis-dihydroxy-2-cyclopenten-1-yl)amino)methyl)-7-deazaguanosine). The chain is Queuine tRNA-ribosyltransferase from Pelotomaculum thermopropionicum (strain DSM 13744 / JCM 10971 / SI).